We begin with the raw amino-acid sequence, 141 residues long: Regulator of ribonuclease activity B (141 aa).

Residues 119 to 132 (DEDFDDEDDDEDYD) show a composition bias toward acidic residues. Residues 119–141 (DEDFDDEDDDEDYDKDGFPIERH) form a disordered region.

It belongs to the RraB family. As to quaternary structure, interacts with the C-terminal region of Rne.

The protein resides in the cytoplasm. In terms of biological role, globally modulates RNA abundance by binding to RNase E (Rne) and regulating its endonucleolytic activity. Can modulate Rne action in a substrate-dependent manner by altering the composition of the degradosome. In Shewanella amazonensis (strain ATCC BAA-1098 / SB2B), this protein is Regulator of ribonuclease activity B.